Here is a 344-residue protein sequence, read N- to C-terminus: L-rhamnose-proton symporter (344 aa).

The next 10 helical transmembrane spans lie at 4 to 24, 38 to 58, 68 to 88, 101 to 121, 137 to 157, 175 to 195, 214 to 234, 259 to 279, 290 to 310, and 323 to 343; these read AITMGIFWHLIGAASAACFYA, WSVGGIVSWIILPWAISALLL, FSLSTLLPVFLFGAMWGIGNI, MGIGIAIGITLIVGTLMTPII, TLLGVLVALIGVGIVTRAGQL, LVLAVMCGIFSAGMSFAMNAA, LPSYVVIMGGGAIINLGFCFI, VLLSALGGLMWYLQFFFYAWG, ISWMLHMSFYVLCGGIVGLVL, and VLSLGCVVIIVAANIVGMGMA.

This sequence belongs to the L-rhamnose transporter (TC 2.A.7.6) family.

Its subcellular location is the cell inner membrane. The enzyme catalyses L-rhamnopyranose(in) + H(+)(in) = L-rhamnopyranose(out) + H(+)(out). Its function is as follows. Uptake of L-rhamnose across the cytoplasmic membrane with the concomitant transport of protons into the cell (symport system). This chain is L-rhamnose-proton symporter, found in Escherichia coli O157:H7.